Consider the following 392-residue polypeptide: DNA replication and repair protein RecF (392 aa).

30–37 contacts ATP; that stretch reads GPNAAGKT.

It belongs to the RecF family.

It is found in the cytoplasm. The RecF protein is involved in DNA metabolism; it is required for DNA replication and normal SOS inducibility. RecF binds preferentially to single-stranded, linear DNA. It also seems to bind ATP. In Chloroflexus aggregans (strain MD-66 / DSM 9485), this protein is DNA replication and repair protein RecF.